The following is a 947-amino-acid chain: Regulator of spindle assembly protein 2 (947 aa).

2 disordered regions span residues 20–148 and 173–211; these read EKPA…LSEQ and SPHE…LKPR. Composition is skewed to basic and acidic residues over residues 30 to 50 and 62 to 84; these read PKYR…EGEK and TRED…DLRI. 2 stretches are compositionally biased toward polar residues: residues 90 to 102 and 179 to 188; these read SATP…SDQY and QQTIQESSEQ. Residues 276 to 320 adopt a coiled-coil conformation; the sequence is IIAEEAKKRRNEAEAVRKLIEVETQNAKKRAVIQELKDRIDKLTQ. Disordered stretches follow at residues 407–453, 575–594, 600–662, and 681–705; these read KINP…RRIG, ERES…LEIP, SVTT…GLII, and EQSL…FLLD. Over residues 411–422 the composition is skewed to low complexity; the sequence is SSQLNQQSSSDA. A compositionally biased stretch (polar residues) spans 430–449; that stretch reads EASTQMTSRLAESAMTQTSP. A coiled-coil region spans residues 563–591; that stretch reads AGLSHYLEQVKKERESMEAQESESESMEL. Positions 580–590 are enriched in acidic residues; sequence EAQESESESME. The span at 645-657 shows a compositional bias: basic and acidic residues; it reads FEHEIEEHKEPEK.

Interacts with phosphatase regulatory subunit rsa-1 and tpxl-1. May interact with spd-5. May interact with sys-1.

Its subcellular location is the cytoplasm. The protein resides in the cytoskeleton. It localises to the microtubule organizing center. The protein localises to the centrosome. In terms of biological role, recruits rsa-1 and, thereby, phosphatase let-92/paa-1 complex to the centrosomes. Recruits sys-1/beta-catenin to mitotic centrosomes during the first embryonic cell divisions. This chain is Regulator of spindle assembly protein 2, found in Caenorhabditis elegans.